We begin with the raw amino-acid sequence, 384 residues long: 1-deoxy-D-xylulose 5-phosphate reductoisomerase (384 aa).

Residues Thr-10, Gly-11, Ser-12, Ile-13, Asn-38, and Asn-120 each contribute to the NADPH site. Residue Lys-121 participates in 1-deoxy-D-xylulose 5-phosphate binding. Glu-122 lines the NADPH pocket. Asp-146 provides a ligand contact to Mn(2+). 1-deoxy-D-xylulose 5-phosphate is bound by residues Ser-147, Glu-148, Ser-172, and His-195. A Mn(2+)-binding site is contributed by Glu-148. Gly-201 serves as a coordination point for NADPH. Residues Ser-208, Asn-213, Lys-214, and Glu-217 each coordinate 1-deoxy-D-xylulose 5-phosphate. Glu-217 contacts Mn(2+).

It belongs to the DXR family. It depends on Mg(2+) as a cofactor. Mn(2+) serves as cofactor.

The enzyme catalyses 2-C-methyl-D-erythritol 4-phosphate + NADP(+) = 1-deoxy-D-xylulose 5-phosphate + NADPH + H(+). It participates in isoprenoid biosynthesis; isopentenyl diphosphate biosynthesis via DXP pathway; isopentenyl diphosphate from 1-deoxy-D-xylulose 5-phosphate: step 1/6. Its function is as follows. Catalyzes the NADPH-dependent rearrangement and reduction of 1-deoxy-D-xylulose-5-phosphate (DXP) to 2-C-methyl-D-erythritol 4-phosphate (MEP). The chain is 1-deoxy-D-xylulose 5-phosphate reductoisomerase from Protochlamydia amoebophila (strain UWE25).